We begin with the raw amino-acid sequence, 411 residues long: Phospholipase ABHD3 (411 aa).

A helical; Signal-anchor for type II membrane protein membrane pass occupies residues 25-45 (VGFFGSGVGLSLILGFSVAYA). Positions 140–233 (PTILLLPGLT…MLLLNYLGKI (94 aa)) constitute an AB hydrolase-1 domain. Catalysis depends on charge relay system residues S220, D346, and H375.

Belongs to the AB hydrolase superfamily. AB hydrolase 4 family. In terms of tissue distribution, widely expressed with higher expression in liver.

It localises to the membrane. The enzyme catalyses a 1,2-diacyl-sn-glycero-3-phosphocholine + H2O = a 1-acyl-sn-glycero-3-phosphocholine + a fatty acid + H(+). The catalysed reaction is a 1,2-diacyl-sn-glycero-3-phosphocholine + H2O = a 2-acyl-sn-glycero-3-phosphocholine + a fatty acid + H(+). It catalyses the reaction 1-tetradecanoyl-2-(9Z,12Z-octadecadienoyl)-sn-glycero-3-phosphocholine + H2O = 2-(9Z,12Z-octadecadienoyl)-sn-glycero-3-phosphocholine + tetradecanoate + H(+). It carries out the reaction 1-tetradecanoyl-2-(9Z,12Z-octadecadienoyl)-sn-glycero-3-phosphocholine + H2O = 1-tetradecanoyl-sn-glycero-3-phosphocholine + (9Z,12Z)-octadecadienoate + H(+). The enzyme catalyses 1-tetradecanoyl-2-(5Z,8Z,11Z,14Z-eicosatetraenoyl)-sn-glycero-3-phosphocholine + H2O = 2-(5Z,8Z,11Z,14Z)-eicosatetraenoyl-sn-glycero-3-phosphocholine + tetradecanoate + H(+). The catalysed reaction is 1-tetradecanoyl-2-(4Z,7Z,10Z,13Z,16Z,19Z-docosahexaenoyl)-sn-glycero-3-phosphocholine + H2O = 2-(4Z,7Z,10Z,13Z,16Z,19Z-docosahexaenoyl)-sn-glycero-3-phosphocholine + tetradecanoate + H(+). It catalyses the reaction 1,2-ditetradecanoyl-sn-glycero-3-phosphocholine + H2O = 2-tetradecanoyl-sn-glycero-3-phosphocholine + tetradecanoate + H(+). It carries out the reaction 1-octadecanoyl-2-acetyl-sn-glycero-3-phosphocholine + H2O = 1-octadecanoyl-sn-glycero-3-phosphocholine + acetate + H(+). The enzyme catalyses 1,2-ditetradecanoyl-sn-glycero-3-phosphocholine + H2O = 1-tetradecanoyl-sn-glycero-3-phosphocholine + tetradecanoate + H(+). The catalysed reaction is 1-octadecanoyl-2-pentanoyl-sn-glycero-3-phosphocholine + H2O = pentanoate + 1-octadecanoyl-sn-glycero-3-phosphocholine + H(+). It catalyses the reaction 1-octadecanoyl-2-hexanoyl-sn-glycero-3-phosphocholine + H2O = hexanoate + 1-octadecanoyl-sn-glycero-3-phosphocholine + H(+). It carries out the reaction 1-octadecanoyl-2-octanoyl-sn-glycero-3-phosphocholine + H2O = 1-octadecanoyl-sn-glycero-3-phosphocholine + octanoate + H(+). The enzyme catalyses 1-octadecanoyl-2-nonanoyl-sn-glycero-3-phosphocholine + H2O = nonanoate + 1-octadecanoyl-sn-glycero-3-phosphocholine + H(+). The catalysed reaction is 1-O-hexadecyl-2-nonadioyl-sn-glycero-3-phosphocholine + H2O = nonanedioate + 1-O-hexadecyl-sn-glycero-3-phosphocholine + H(+). It catalyses the reaction 1-hexadecanoyl-2-nonadioyl-sn-glycero-3-phosphocholine + H2O = nonanedioate + 1-hexadecanoyl-sn-glycero-3-phosphocholine + H(+). It carries out the reaction 1-hexadecanoyl-2-(9-oxononanoyl)-sn-glycero-3-phosphocholine + H2O = 9-oxononanoate + 1-hexadecanoyl-sn-glycero-3-phosphocholine + H(+). The enzyme catalyses 1-hexadecanoyl-2-(5-oxopentanoyl)-sn-glycero-3-phosphocholine + H2O = 5-oxopentanoate + 1-hexadecanoyl-sn-glycero-3-phosphocholine + H(+). The catalysed reaction is 1-hexadecanoyl-2-glutaroyl-sn-glycero-3-phosphocholine + H2O = glutarate + 1-hexadecanoyl-sn-glycero-3-phosphocholine + H(+). It catalyses the reaction 1-O-hexadecyl-2-acetyl-sn-glycero-3-phosphocholine + H2O = 1-O-hexadecyl-sn-glycero-3-phosphocholine + acetate + H(+). In terms of biological role, phospholipase that may play a role in phospholipids remodeling. May selectively cleave myristate (C14)-containing phosphatidylcholines through its predominant phospholipase 1 activity, cleaving preferentially acyl groups in sn1 position. In parallel, may have a minor phospholipase 2 activity acting on acyl groups in position sn2. In addition to (C14)-containing phosphatidylcholines, may also act on other medium-chain-containing and oxidatively truncated phospholipids. This chain is Phospholipase ABHD3, found in Mus musculus (Mouse).